The following is a 741-amino-acid chain: Protein O-mannosyl-transferase TMTC4 (741 aa).

Residues 1 to 14 (MAVLDTDLDHILPS) are Cytoplasmic-facing. The chain crosses the membrane as a helical span at residues 15-35 (SVLPPFWAKLVVGSVAIVCFA). Over 36–111 (RSYDGDFVFD…FHPVGFHVVN (76 aa)) the chain is Extracellular. A glycan (N-linked (GlcNAc...) asparagine) is linked at asparagine 78. The chain crosses the membrane as a helical span at residues 112–132 (ILLHSGISVLMVDVFSVLFGG). At 133–141 (LQYTSKGRR) the chain is on the cytoplasmic side. A helical transmembrane segment spans residues 142 to 162 (LHLAPRASLLAALLFAVHPVH). Residues 163-165 (TEC) are Extracellular-facing. A helical membrane pass occupies residues 166–186 (VAGVVGRADLLCALFFLLSFL). Over 187-198 (GYCKAFRESNKE) the chain is Cytoplasmic. The chain crosses the membrane as a helical span at residues 199–219 (GAHSSTFWVLLSIFLGAVAML). At 220-224 (CKEQG) the chain is on the extracellular side. The chain crosses the membrane as a helical span at residues 225–245 (ITVLGLNAVFDILVIGKFNVL). Residues 246 to 268 (EIVQKVLHKDKSLENLGMLRNGG) lie on the Cytoplasmic side of the membrane. The helical transmembrane segment at 269–288 (LLFRMTLLTSGGAGMLYVRW) threads the bilayer. Topologically, residues 289-354 (RIMGTGPPAF…PLIKSISDWR (66 aa)) are extracellular. A helical membrane pass occupies residues 355 to 375 (VIALAALWFCLIGLICQALCS). At 376 to 382 (EDGHKRR) the chain is on the cytoplasmic side. A helical membrane pass occupies residues 383–403 (ILTLGLGFLVIPFLPASNLFF). At 404 to 412 (RVGFVVAER) the chain is on the extracellular side. Residues 413-433 (VLYLPSVGYCVLLTFGFGALS) traverse the membrane as a helical segment. At 434–440 (KHTKKKK) the chain is on the cytoplasmic side. A helical membrane pass occupies residues 441–461 (LIAAVVLGILFINTLRCVLRS). Topologically, residues 462–741 (GEWRSEEQLF…KLELMQKKAV (280 aa)) are extracellular. TPR repeat units lie at residues 482-515 (AKVH…NPKY), 516-549 (VHAM…QPDF), 550-583 (AAAW…RRKY), 584-617 (PDCY…KPEH), 618-651 (SLAW…IPND), 652-685 (HSLM…NPNA), and 686-719 (ASYH…DPTA). An N-linked (GlcNAc...) asparagine glycan is attached at asparagine 497. N-linked (GlcNAc...) asparagine glycosylation is present at asparagine 609.

The protein belongs to the TMTC family.

It localises to the membrane. The protein localises to the endoplasmic reticulum. It catalyses the reaction a di-trans,poly-cis-dolichyl beta-D-mannosyl phosphate + L-seryl-[protein] = 3-O-(alpha-D-mannosyl)-L-seryl-[protein] + a di-trans,poly-cis-dolichyl phosphate + H(+). It carries out the reaction a di-trans,poly-cis-dolichyl beta-D-mannosyl phosphate + L-threonyl-[protein] = 3-O-(alpha-D-mannosyl)-L-threonyl-[protein] + a di-trans,poly-cis-dolichyl phosphate + H(+). The protein operates within protein modification; protein glycosylation. Its function is as follows. Transfers mannosyl residues to the hydroxyl group of serine or threonine residues. The 4 members of the TMTC family are O-mannosyl-transferases dedicated primarily to the cadherin superfamily, each member seems to have a distinct role in decorating the cadherin domains with O-linked mannose glycans at specific regions. Also acts as O-mannosyl-transferase on other proteins such as PDIA3. In Homo sapiens (Human), this protein is Protein O-mannosyl-transferase TMTC4.